We begin with the raw amino-acid sequence, 266 residues long: Protein crossbronx-like (266 aa).

The UBC core domain occupies 15–178; the sequence is KQGYHILAEY…VQEQAILSRN (164 aa). A disordered region spans residues 234–266; that stretch reads SSRQLDEEEANQVEKLHRGRIPEHQREESEVSL. Over residues 245–266 the composition is skewed to basic and acidic residues; it reads QVEKLHRGRIPEHQREESEVSL.

This sequence belongs to the ubiquitin-conjugating enzyme family. FTS subfamily.

This is Protein crossbronx-like from Drosophila melanogaster (Fruit fly).